The sequence spans 195 residues: Holliday junction branch migration complex subunit RuvA (195 aa).

The tract at residues 1–64 (MIASIRGIIQ…EDALTLYGFS (64 aa)) is domain I. Residues 65–142 (DPAQRNLFEQ…DLRQLSGTTP (78 aa)) form a domain II region. Residues 143 to 151 (GNVSTLDRE) are flexible linker. The domain III stretch occupies residues 151–195 (ELTDILISLGYSATEAAAAIAALPGDAPPTLEERLRLALRYFGSA).

This sequence belongs to the RuvA family. In terms of assembly, homotetramer. Forms an RuvA(8)-RuvB(12)-Holliday junction (HJ) complex. HJ DNA is sandwiched between 2 RuvA tetramers; dsDNA enters through RuvA and exits via RuvB. An RuvB hexamer assembles on each DNA strand where it exits the tetramer. Each RuvB hexamer is contacted by two RuvA subunits (via domain III) on 2 adjacent RuvB subunits; this complex drives branch migration. In the full resolvosome a probable DNA-RuvA(4)-RuvB(12)-RuvC(2) complex forms which resolves the HJ.

The protein resides in the cytoplasm. Functionally, the RuvA-RuvB-RuvC complex processes Holliday junction (HJ) DNA during genetic recombination and DNA repair, while the RuvA-RuvB complex plays an important role in the rescue of blocked DNA replication forks via replication fork reversal (RFR). RuvA specifically binds to HJ cruciform DNA, conferring on it an open structure. The RuvB hexamer acts as an ATP-dependent pump, pulling dsDNA into and through the RuvAB complex. HJ branch migration allows RuvC to scan DNA until it finds its consensus sequence, where it cleaves and resolves the cruciform DNA. The chain is Holliday junction branch migration complex subunit RuvA from Chloroflexus aurantiacus (strain ATCC 29364 / DSM 637 / Y-400-fl).